A 494-amino-acid chain; its full sequence is Hydroxyneurosporene desaturase (494 aa).

It belongs to the carotenoid/retinoid oxidoreductase family.

It carries out the reaction rhodopin + A = (3E)-3,4-didehydrorhodopin + AH2. It functions in the pathway carotenoid biosynthesis; spheroidene biosynthesis. Catalyzes the introduction of C-3,4 double bonds into 1-hydroxyneurosporene (1-HO-Neu) to yield demethylspheroidene (DMS). The sequence is that of Hydroxyneurosporene desaturase (crtD) from Rhodobacter capsulatus (strain ATCC BAA-309 / NBRC 16581 / SB1003).